Here is a 251-residue protein sequence, read N- to C-terminus: NADPH-dependent oxidoreductase (251 aa).

Belongs to the flavin oxidoreductase frp family. FMN serves as cofactor.

In terms of biological role, reduces FMN, organic nitro compounds and disulfide DTNB. Involved in maintenance of the cellular redox state and the disulfide stress response. The protein is NADPH-dependent oxidoreductase (nfrA) of Staphylococcus haemolyticus (strain JCSC1435).